The sequence spans 167 residues: Cell number regulator 3 (167 aa).

A helical transmembrane segment spans residues glycine 67 to leucine 84.

Belongs to the cornifelin family. Expressed only in pollen.

Its subcellular location is the membrane. This Zea mays (Maize) protein is Cell number regulator 3 (CNR3).